The following is a 574-amino-acid chain: Probable glucomannan 4-beta-mannosyltransferase 6 (574 aa).

A helical transmembrane segment spans residues 87–107 (VVACMVMSVIVLAEKVFLGVV). Asp180 is a catalytic residue. Substrate-binding residues include Asp239 and Asp241. Asp333 is an active-site residue. 4 helical membrane passes run 412–432 (IIST…KVFF), 437–457 (IPLW…SVGT), 523–543 (FHCL…YDYL), and 548–568 (IFYI…FEFM).

It belongs to the glycosyltransferase 2 family. Plant cellulose synthase-like A subfamily.

The protein localises to the golgi apparatus membrane. It carries out the reaction GDP-mannose + (glucomannan)n = GDP + (glucomannan)n+1.. Functionally, probable mannan synthase which consists of a 4-beta-mannosyltransferase activity on mannan using GDP-mannose. The beta-1,4-mannan product is the backbone for galactomannan synthesis by galactomannan galactosyltransferase. Galactomannan is a noncellulosic polysaccharides of plant cell wall. The chain is Probable glucomannan 4-beta-mannosyltransferase 6 from Oryza sativa subsp. japonica (Rice).